We begin with the raw amino-acid sequence, 216 residues long: N-(5'-phosphoribosyl)anthranilate isomerase (216 aa).

This sequence belongs to the TrpF family.

The enzyme catalyses N-(5-phospho-beta-D-ribosyl)anthranilate = 1-(2-carboxyphenylamino)-1-deoxy-D-ribulose 5-phosphate. Its pathway is amino-acid biosynthesis; L-tryptophan biosynthesis; L-tryptophan from chorismate: step 3/5. This Methanopyrus kandleri (strain AV19 / DSM 6324 / JCM 9639 / NBRC 100938) protein is N-(5'-phosphoribosyl)anthranilate isomerase.